We begin with the raw amino-acid sequence, 503 residues long: MDYLILMICIVVSGLLLYSSRTSKMKLPPGPPGLPIVGNLFDLGSLPHRSLAKLAKLHGPVMCLRMGRLRVVVISSDSAAKEVLQTSDTLFCNRFVYDSLTASQHHTFSMALLPPTALWKSLRKISASQLFTNARMNASQHLRRKQLEDLLSYVESCSRSGTAINIAQAAFNTSVNLLSKTFFSVDLIDPSSSNSVEFKEMVWQIMLESGTPNLADYFPVLRRIDPQGNRRRMKIQFEKILDLFNTMIRQRLDEKGGCFDEINDTLDALLKINQDNSEELDLSVIPHLLLDLFVGGSESTSSTVEWAMALLFSNPEKMKKAKEELETVVGKGIAVKEEDTGRLPYLQAAIKETFRMHPPTPFLIPRKTDSDVDLCGFTVQKGSQVIVNAWAIGRDPSLWENADTFEPERFLGMEIDVKGRNFELIPFGAGRRICPGLPIAMRMLTLMVANLINCFEWRLEGGAAPETLDMSDKIGFTLQRAHPFRVIPTSIIQGCDVSTALNN.

A helical transmembrane segment spans residues 7–23 (MICIVVSGLLLYSSRTS). Ser471 is a binding site for heme.

Belongs to the cytochrome P450 family. Requires heme as cofactor.

The protein resides in the membrane. It catalyses the reaction (5S,9S,10S)-drim-7-en-11-ol + reduced [NADPH--hemoprotein reductase] + O2 = (5S,10S)-(9R)-7-drimene-11,12-diol + oxidized [NADPH--hemoprotein reductase] + H2O + H(+). Its function is as follows. Catalyzes the conversion of drimenol to drimendiol, a precursor of the sesquiterpenoid polygodial. Polygodial has been shown to be an antifeedant for a number of herbivorous insects. In Persicaria hydropiper (Marshpepper knotweed), this protein is Drimenol monooxygenase.